The sequence spans 567 residues: Proline--tRNA ligase (567 aa).

Belongs to the class-II aminoacyl-tRNA synthetase family. ProS type 1 subfamily. In terms of assembly, homodimer.

Its subcellular location is the cytoplasm. The enzyme catalyses tRNA(Pro) + L-proline + ATP = L-prolyl-tRNA(Pro) + AMP + diphosphate. In terms of biological role, catalyzes the attachment of proline to tRNA(Pro) in a two-step reaction: proline is first activated by ATP to form Pro-AMP and then transferred to the acceptor end of tRNA(Pro). As ProRS can inadvertently accommodate and process non-cognate amino acids such as alanine and cysteine, to avoid such errors it has two additional distinct editing activities against alanine. One activity is designated as 'pretransfer' editing and involves the tRNA(Pro)-independent hydrolysis of activated Ala-AMP. The other activity is designated 'posttransfer' editing and involves deacylation of mischarged Ala-tRNA(Pro). The misacylated Cys-tRNA(Pro) is not edited by ProRS. This is Proline--tRNA ligase from Geobacillus sp. (strain WCH70).